Here is a 178-residue protein sequence, read N- to C-terminus: Large ribosomal subunit protein uL6 (178 aa).

It belongs to the universal ribosomal protein uL6 family. As to quaternary structure, part of the 50S ribosomal subunit.

In terms of biological role, this protein binds to the 23S rRNA, and is important in its secondary structure. It is located near the subunit interface in the base of the L7/L12 stalk, and near the tRNA binding site of the peptidyltransferase center. This is Large ribosomal subunit protein uL6 from Limosilactobacillus fermentum (strain NBRC 3956 / LMG 18251) (Lactobacillus fermentum).